The following is a 353-amino-acid chain: ATP-dependent kinase YFH7 (353 aa).

31–39 (GSPGSGKST) is an ATP binding site.

The protein belongs to the YFH7 family.

Functionally, ATP-dependent kinase that could be involved in endoplasmic reticulum membrane assembly. The protein is ATP-dependent kinase YFH7 (YFH7) of Saccharomyces cerevisiae (strain ATCC 204508 / S288c) (Baker's yeast).